A 270-amino-acid chain; its full sequence is Phosphodiesterase YaeI (270 aa).

The a divalent metal cation site is built by D56, H58, D88, N120, H209, and H211.

It belongs to the metallophosphoesterase superfamily. Requires a divalent metal cation as cofactor.

Shows phosphodiesterase activity, hydrolyzing phosphodiester bond in the artificial chromogenic substrate bis-p-nitrophenyl phosphate (bis-pNPP). The polypeptide is Phosphodiesterase YaeI (yaeI) (Escherichia coli (strain K12)).